An 860-amino-acid polypeptide reads, in one-letter code: Alanine--tRNA ligase (860 aa).

Positions 563, 567, 665, and 669 each coordinate Zn(2+).

The protein belongs to the class-II aminoacyl-tRNA synthetase family. Requires Zn(2+) as cofactor.

It is found in the cytoplasm. It catalyses the reaction tRNA(Ala) + L-alanine + ATP = L-alanyl-tRNA(Ala) + AMP + diphosphate. Its function is as follows. Catalyzes the attachment of alanine to tRNA(Ala) in a two-step reaction: alanine is first activated by ATP to form Ala-AMP and then transferred to the acceptor end of tRNA(Ala). Also edits incorrectly charged Ser-tRNA(Ala) and Gly-tRNA(Ala) via its editing domain. The chain is Alanine--tRNA ligase from Vibrio cholerae serotype O1 (strain ATCC 39315 / El Tor Inaba N16961).